The chain runs to 408 residues: UDP-N-acetylglucosamine--dolichyl-phosphate N-acetylglucosaminephosphotransferase (408 aa).

Topologically, residues 1-10 (MWAFPELPLP) are lumenal. A helical membrane pass occupies residues 11–38 (LLVNLFGSLLGFVATVTLIPAFRSHFIA). The Cytoplasmic portion of the chain corresponds to 39-58 (ARLCGQDLNKLSRQQIPESQ). Residues 44–46 (QDL) and Glu56 contribute to the UDP-N-acetyl-alpha-D-glucosamine site. The helical transmembrane segment at 59–78 (GVICGAVFLIILFCFIPFPF) threads the bilayer. Residues 79 to 91 (LNCFVEEQCKAFP) are Lumenal-facing. The helical transmembrane segment at 92-118 (HHEFVALIGALLAICCMIFLGFADDVL) threads the bilayer. At 119–121 (NLR) the chain is on the cytoplasmic side. The helical transmembrane segment at 122–143 (WRHKLLLPTAASLPLLMVYFTN) threads the bilayer. Dolichyl phosphate is bound at residue Lys125. At 144–166 (FGNTTIVVPKPFRWILGLHLDLG) the chain is on the lumenal side. An N-linked (GlcNAc...) asparagine glycan is attached at Asn146. Residues 167–186 (ILYYVYMGLLAVFCTNAINI) form a helical membrane-spanning segment. 178–186 (VFCTNAINI) contributes to the dolichyl phosphate binding site. Asn185 contributes to the Mg(2+) binding site. Over 187–192 (LAGING) the chain is Cytoplasmic. Asn191 contacts UDP-N-acetyl-alpha-D-glucosamine. Residues 193–213 (LEAGQSLVISASIIVFNLVEL) form a helical membrane-spanning segment. The Lumenal segment spans residues 214 to 218 (EGDYR). Residues 219–242 (DDHVFSLYFMIPFFFTTLGLLYHN) traverse the membrane as a helical segment. Over 243 to 250 (WYPSQVFV) the chain is Cytoplasmic. A helical transmembrane segment spans residues 251–269 (GDTFCYFAGMTFAVVGILG). Asp252 contributes to the Mg(2+) binding site. Over 270 to 271 (HF) the chain is Lumenal. A helical transmembrane segment spans residues 272–293 (SKTMLLFFIPQVFNFLYSLPQL). Topologically, residues 294-375 (LHAIPCPRHR…LLLKIFGPIH (82 aa)) are cytoplasmic. 301-303 (RHR) serves as a coordination point for UDP-N-acetyl-alpha-D-glucosamine. Residues 376–400 (ERNLTLLLLLLQILSSAVTFSIRYQ) form a helical membrane-spanning segment. At 401 to 408 (LVRLFYDV) the chain is on the lumenal side.

Belongs to the glycosyltransferase 4 family. In terms of assembly, homodimer. Mg(2+) serves as cofactor.

The protein resides in the endoplasmic reticulum membrane. It catalyses the reaction a di-trans,poly-cis-dolichyl phosphate + UDP-N-acetyl-alpha-D-glucosamine = an N-acetyl-alpha-D-glucosaminyl-diphospho-di-trans,poly-cis-dolichol + UMP. It participates in protein modification; protein glycosylation. Its activity is regulated as follows. Inhibited by natural nucleoside antibiotic tunicamycin, which acts as a structural analog and competitor of UDP-GlcNAc. Its function is as follows. UDP-N-acetylglucosamine--dolichyl-phosphate N-acetylglucosaminephosphotransferase that operates in the biosynthetic pathway of dolichol-linked oligosaccharides, the glycan precursors employed in protein asparagine (N)-glycosylation. The assembly of dolichol-linked oligosaccharides begins on the cytosolic side of the endoplasmic reticulum membrane and finishes in its lumen. The sequential addition of sugars to dolichol pyrophosphate produces dolichol-linked oligosaccharides containing fourteen sugars, including two GlcNAcs, nine mannoses and three glucoses. Once assembled, the oligosaccharide is transferred from the lipid to nascent proteins by oligosaccharyltransferases. Catalyzes the initial step of dolichol-linked oligosaccharide biosynthesis, transfering GlcNAc-1-P from cytosolic UDP-GlcNAc onto the carrier lipid dolichyl phosphate (P-dolichol), yielding GlcNAc-P-P-dolichol embedded in the cytoplasmic leaflet of the endoplasmic reticulum membrane. The protein is UDP-N-acetylglucosamine--dolichyl-phosphate N-acetylglucosaminephosphotransferase (DPAGT1) of Cricetulus griseus (Chinese hamster).